The sequence spans 427 residues: Glutamate-1-semialdehyde 2,1-aminomutase (427 aa).

Position 265 is an N6-(pyridoxal phosphate)lysine (lysine 265).

Belongs to the class-III pyridoxal-phosphate-dependent aminotransferase family. HemL subfamily. As to quaternary structure, homodimer. Requires pyridoxal 5'-phosphate as cofactor.

The protein resides in the cytoplasm. It carries out the reaction (S)-4-amino-5-oxopentanoate = 5-aminolevulinate. The protein operates within porphyrin-containing compound metabolism; protoporphyrin-IX biosynthesis; 5-aminolevulinate from L-glutamyl-tRNA(Glu): step 2/2. The chain is Glutamate-1-semialdehyde 2,1-aminomutase from Pseudomonas syringae pv. tomato (strain ATCC BAA-871 / DC3000).